We begin with the raw amino-acid sequence, 298 residues long: Protease HtpX homolog (298 aa).

2 consecutive transmembrane segments (helical) span residues 14 to 34 and 39 to 59; these read ILVM…IGYL and VIGG…VIIG. His-144 provides a ligand contact to Zn(2+). The active site involves Glu-145. Position 148 (His-148) interacts with Zn(2+). A run of 2 helical transmembrane segments spans residues 159-179 and 195-215; these read IALA…NFWW and IFAI…ATIA. A Zn(2+)-binding site is contributed by Glu-224.

Belongs to the peptidase M48B family. It depends on Zn(2+) as a cofactor.

It localises to the cell membrane. This chain is Protease HtpX homolog, found in Limosilactobacillus reuteri (strain DSM 20016) (Lactobacillus reuteri).